A 483-amino-acid polypeptide reads, in one-letter code: MLHIYNTLSRTKETFKPVHAGEVRIYVCGMTVYDYCHLGHARMLVAFDVVQRWLRASGYAVNYVRNITDIDDKIIRRAVQTGRRMHEVTDYFIAAMHADERALAVERPDHEPRATAYVGEMIDIIGRLEKNGLAYQADDGDVNYAVRGFQGYGKLSGKSLDDLRAGERVAVGSSKRDPLDFVLWKSAKEEEPPETKWDSPYGFGRPGWHIECSAMSKSLLGLPLDIHGGGPDLKFPHHENEIAQTEGAFGGTLANIWMHCGPLMVDAEKMSKSLGNFRTIRQTIAQGEAQDGEADYQANPREAEMLRFFIVRNHYRSPQNYTPDNLVDAQNALDRLYQALANVTPDVAGIDWNEAQAQAFKAAMNDDFNSSGAVAALFELAGQVNRERDSRAAGQLKALGAVLGLLQQDPAVYFQSSTRYSSAGMQQGASQMDAARIEALIAERGQAKLSRDFARADAIRAELRAAGIELDDKPGGMTQWRRA.

A Zn(2+)-binding site is contributed by Cys28. Positions 30 to 40 match the 'HIGH' region motif; it reads MTVYDYCHLGH. Positions 212, 237, and 241 each coordinate Zn(2+). Residues 269 to 273 carry the 'KMSKS' region motif; sequence KMSKS. Lys272 contacts ATP.

Belongs to the class-I aminoacyl-tRNA synthetase family. In terms of assembly, monomer. It depends on Zn(2+) as a cofactor.

It localises to the cytoplasm. The catalysed reaction is tRNA(Cys) + L-cysteine + ATP = L-cysteinyl-tRNA(Cys) + AMP + diphosphate. This Bordetella avium (strain 197N) protein is Cysteine--tRNA ligase.